The sequence spans 110 residues: Large ribosomal subunit protein uL22 (110 aa).

It belongs to the universal ribosomal protein uL22 family. As to quaternary structure, part of the 50S ribosomal subunit.

This protein binds specifically to 23S rRNA; its binding is stimulated by other ribosomal proteins, e.g. L4, L17, and L20. It is important during the early stages of 50S assembly. It makes multiple contacts with different domains of the 23S rRNA in the assembled 50S subunit and ribosome. In terms of biological role, the globular domain of the protein is located near the polypeptide exit tunnel on the outside of the subunit, while an extended beta-hairpin is found that lines the wall of the exit tunnel in the center of the 70S ribosome. In Histophilus somni (strain 129Pt) (Haemophilus somnus), this protein is Large ribosomal subunit protein uL22.